A 216-amino-acid polypeptide reads, in one-letter code: MSCLPALDKFLQNYHQAYLTTLGELPRYYPQGEPSVCIQGEFFADSDKPIAWQPVKRDEVGSFTNVEHALDLPLWPDIHLFYGQYFSAPLLFDSKWGTGELLQVWNDDDFKCLQQNVIGHLMMKKKLKQPPTWFIGLLDEGDKMLTINNSDGSVWIEIPGEEQSEQLSTSLTAFIEALSPRIAPPVKHEELPMPALDHPGIFANIKRMWQNLFGKG.

The protein belongs to the Syd family.

It localises to the cell inner membrane. Interacts with the SecY protein in vivo. May bind preferentially to an uncomplexed state of SecY, thus functioning either as a chelating agent for excess SecY in the cell or as a regulatory factor that negatively controls the translocase function. The chain is Protein Syd from Shewanella sp. (strain W3-18-1).